The primary structure comprises 230 residues: CRP-like protein Clp (230 aa).

18-139 (PSLALDAGTI…APKILYAIGV (122 aa)) serves as a coordination point for a nucleoside 3',5'-cyclic phosphate. Residues 158-230 (LDVTDRIVRT…GKTVVLYGTR (73 aa)) form the HTH crp-type domain. Residues 190–209 (RQELARLVGCSREMAGRVLK) constitute a DNA-binding region (H-T-H motif).

In terms of assembly, homodimer.

The protein resides in the cytoplasm. With respect to regulation, allosterically inhibited by cyclic di-GMP (c-di-GMP), which binds to Clp and abolishes its ability to bind its target gene promoter. Its function is as follows. Global transcriptional regulator that regulates virulence factors production by activating or repressing the expression of a large set of genes in diffusible signal factor (DSF) pathway. The chain is CRP-like protein Clp (clp) from Xanthomonas axonopodis pv. citri (strain 306).